The chain runs to 720 residues: Long chain acyl-CoA synthetase 8 (720 aa).

Met-1 bears the N-acetylmethionine mark. 279–290 (IMFTSGSTGLPK) is an ATP binding site. Residues 554–582 (DEKGTRWFYTGDIGRFHPDGCLEVIDRKK) form a fatty acid-binding region.

Belongs to the ATP-dependent AMP-binding enzyme family. Mg(2+) is required as a cofactor.

The enzyme catalyses a long-chain fatty acid + ATP + CoA = a long-chain fatty acyl-CoA + AMP + diphosphate. It participates in lipid metabolism; fatty acid metabolism. Its function is as follows. Activation of long-chain fatty acids for both synthesis of cellular lipids, and degradation via beta-oxidation. Preferentially uses palmitate, palmitoleate, oleate and linoleate. The chain is Long chain acyl-CoA synthetase 8 (LACS8) from Arabidopsis thaliana (Mouse-ear cress).